Here is a 337-residue protein sequence, read N- to C-terminus: GTPase Obg (337 aa).

The Obg domain maps to 1–161 (MNLTDNAVIF…FKIKLDFVFL (161 aa)). One can recognise an OBG-type G domain in the interval 162–333 (ADVGLFGYSN…LINKILLFLE (172 aa)). GTP is bound by residues 168–175 (GYSNTGRS), 193–197 (FTTLF), 214–217 (DIPS), 282–285 (NKTD), and 314–316 (SLN). Positions 175 and 195 each coordinate Mg(2+).

It belongs to the TRAFAC class OBG-HflX-like GTPase superfamily. OBG GTPase family. As to quaternary structure, monomer. The cofactor is Mg(2+).

The protein resides in the cytoplasm. Its function is as follows. An essential GTPase which binds GTP, GDP and possibly (p)ppGpp with moderate affinity, with high nucleotide exchange rates and a fairly low GTP hydrolysis rate. Plays a role in control of the cell cycle, stress response, ribosome biogenesis and in those bacteria that undergo differentiation, in morphogenesis control. This Wigglesworthia glossinidia brevipalpis protein is GTPase Obg.